A 93-amino-acid chain; its full sequence is Putative septation protein SpoVG (93 aa).

This sequence belongs to the SpoVG family.

Its function is as follows. Could be involved in septation. In Alkaliphilus oremlandii (strain OhILAs) (Clostridium oremlandii (strain OhILAs)), this protein is Putative septation protein SpoVG.